Here is a 401-residue protein sequence, read N- to C-terminus: Acetate kinase (401 aa).

N7 contacts Mg(2+). K14 lines the ATP pocket. R90 is a substrate binding site. D147 (proton donor/acceptor) is an active-site residue. ATP-binding positions include 207–211, 282–284, and 331–335; these read HMGNG, DMR, and GIGEN. Residue E385 participates in Mg(2+) binding.

The protein belongs to the acetokinase family. In terms of assembly, homodimer. Requires Mg(2+) as cofactor. Mn(2+) serves as cofactor.

The protein localises to the cytoplasm. The enzyme catalyses acetate + ATP = acetyl phosphate + ADP. Its pathway is metabolic intermediate biosynthesis; acetyl-CoA biosynthesis; acetyl-CoA from acetate: step 1/2. In terms of biological role, catalyzes the formation of acetyl phosphate from acetate and ATP. Can also catalyze the reverse reaction. The sequence is that of Acetate kinase from Clostridium acetobutylicum (strain ATCC 824 / DSM 792 / JCM 1419 / IAM 19013 / LMG 5710 / NBRC 13948 / NRRL B-527 / VKM B-1787 / 2291 / W).